A 280-amino-acid polypeptide reads, in one-letter code: Pre-mRNA-splicing factor PRP21 (280 aa).

Residues 11-49 form an SURP motif 1 repeat; that stretch reads DIKTTVNYIKQHGVEFENKLLEDERFSFIKKDDPLHEYY. The interval 53 to 72 is disordered; that stretch reads MNEPTDTVSGEDNDRKSERE. The stretch at 95–135 is one SURP motif 2 repeat; sequence VIKLTARYYAKDKSIVEQMISKDGEARLNFMNSSHPLHKTF. 2 stretches are compositionally biased toward basic and acidic residues: residues 246–261 and 269–280; these read EKIV…GDSK and AVGETRLKKSKK. Positions 246–280 are disordered; the sequence is EKIVSDQGKQKGGDSKGKKRKIRAVGETRLKKSKK.

In terms of assembly, belongs to the CWC complex (or CEF1-associated complex), a spliceosome sub-complex reminiscent of a late-stage spliceosome composed of the U2, U5 and U6 snRNAs and at least BUD13, BUD31, BRR2, CDC40, CEF1, CLF1, CUS1, CWC2, CWC15, CWC21, CWC22, CWC23, CWC24, CWC25, CWC27, ECM2, HSH155, IST3, ISY1, LEA1, MSL1, NTC20, PRP8, PRP9, PRP11, PRP19, PRP21, PRP22, PRP45, PRP46, SLU7, SMB1, SMD1, SMD2, SMD3, SMX2, SMX3, SNT309, SNU114, SPP2, SYF1, SYF2, RSE1 and YJU2.

It localises to the nucleus. Its function is as follows. mRNA splicing factors, PRP9, PRP11, and PRP21, are necessary for binding of the U2 snRNP to the pre-mRNA in an early step of spliceosome assembly. In Saccharomyces cerevisiae (strain ATCC 204508 / S288c) (Baker's yeast), this protein is Pre-mRNA-splicing factor PRP21 (PRP21).